Here is a 212-residue protein sequence, read N- to C-terminus: Thymidylate kinase (212 aa).

7-14 (GGEGCGKT) lines the ATP pocket.

It belongs to the thymidylate kinase family.

The enzyme catalyses dTMP + ATP = dTDP + ADP. In terms of biological role, phosphorylation of dTMP to form dTDP in both de novo and salvage pathways of dTTP synthesis. In Gloeobacter violaceus (strain ATCC 29082 / PCC 7421), this protein is Thymidylate kinase.